Consider the following 448-residue polypeptide: Phosphoglucosamine mutase (448 aa).

Ser-99 acts as the Phosphoserine intermediate in catalysis. Residues Ser-99, Asp-239, Asp-241, and Asp-243 each contribute to the Mg(2+) site. The residue at position 99 (Ser-99) is a Phosphoserine.

The protein belongs to the phosphohexose mutase family. It depends on Mg(2+) as a cofactor. In terms of processing, activated by phosphorylation.

It carries out the reaction alpha-D-glucosamine 1-phosphate = D-glucosamine 6-phosphate. In terms of biological role, catalyzes the conversion of glucosamine-6-phosphate to glucosamine-1-phosphate. The protein is Phosphoglucosamine mutase of Lachnoclostridium phytofermentans (strain ATCC 700394 / DSM 18823 / ISDg) (Clostridium phytofermentans).